We begin with the raw amino-acid sequence, 195 residues long: ATP-dependent Clp protease proteolytic subunit (195 aa).

Catalysis depends on S98, which acts as the Nucleophile. H123 is a catalytic residue.

The protein belongs to the peptidase S14 family. In terms of assembly, fourteen ClpP subunits assemble into 2 heptameric rings which stack back to back to give a disk-like structure with a central cavity, resembling the structure of eukaryotic proteasomes.

It is found in the cytoplasm. The enzyme catalyses Hydrolysis of proteins to small peptides in the presence of ATP and magnesium. alpha-casein is the usual test substrate. In the absence of ATP, only oligopeptides shorter than five residues are hydrolyzed (such as succinyl-Leu-Tyr-|-NHMec, and Leu-Tyr-Leu-|-Tyr-Trp, in which cleavage of the -Tyr-|-Leu- and -Tyr-|-Trp bonds also occurs).. Functionally, cleaves peptides in various proteins in a process that requires ATP hydrolysis. Has a chymotrypsin-like activity. Plays a major role in the degradation of misfolded proteins. This chain is ATP-dependent Clp protease proteolytic subunit, found in Staphylococcus aureus (strain Mu3 / ATCC 700698).